Consider the following 463-residue polypeptide: Glutamate--tRNA ligase (463 aa).

The short motif at 10–20 is the 'HIGH' region element; sequence PSPTGYLHIGG. A 'KMSKS' region motif is present at residues 252–256; sequence KLSKR. Residue lysine 255 coordinates ATP.

This sequence belongs to the class-I aminoacyl-tRNA synthetase family. Glutamate--tRNA ligase type 1 subfamily. In terms of assembly, monomer.

It is found in the cytoplasm. The enzyme catalyses tRNA(Glu) + L-glutamate + ATP = L-glutamyl-tRNA(Glu) + AMP + diphosphate. Catalyzes the attachment of glutamate to tRNA(Glu) in a two-step reaction: glutamate is first activated by ATP to form Glu-AMP and then transferred to the acceptor end of tRNA(Glu). The sequence is that of Glutamate--tRNA ligase from Mycoplasmopsis agalactiae (strain NCTC 10123 / CIP 59.7 / PG2) (Mycoplasma agalactiae).